Consider the following 456-residue polypeptide: tRNA-2-methylthio-N(6)-dimethylallyladenosine synthase (456 aa).

An MTTase N-terminal domain is found at 19–136 (LTFNVQTFGC…LAELIYARHT (118 aa)). Residues Cys-28, Cys-63, Cys-97, Cys-173, Cys-177, and Cys-180 each coordinate [4Fe-4S] cluster. Residues 159–389 (QKYKFKAGVN…LTTIRESSSK (231 aa)) form the Radical SAM core domain. Residues 392-455 (KDDEGKIAEV…GFYYMGEMME (64 aa)) form the TRAM domain.

It belongs to the methylthiotransferase family. MiaB subfamily. Monomer. It depends on [4Fe-4S] cluster as a cofactor.

The protein localises to the cytoplasm. It carries out the reaction N(6)-dimethylallyladenosine(37) in tRNA + (sulfur carrier)-SH + AH2 + 2 S-adenosyl-L-methionine = 2-methylsulfanyl-N(6)-dimethylallyladenosine(37) in tRNA + (sulfur carrier)-H + 5'-deoxyadenosine + L-methionine + A + S-adenosyl-L-homocysteine + 2 H(+). Catalyzes the methylthiolation of N6-(dimethylallyl)adenosine (i(6)A), leading to the formation of 2-methylthio-N6-(dimethylallyl)adenosine (ms(2)i(6)A) at position 37 in tRNAs that read codons beginning with uridine. In Lachnoclostridium phytofermentans (strain ATCC 700394 / DSM 18823 / ISDg) (Clostridium phytofermentans), this protein is tRNA-2-methylthio-N(6)-dimethylallyladenosine synthase.